The chain runs to 859 residues: MQEQYNPSEIEALVQKHWHDNKTFEVTEDANKEKFYCLSMFPYPSGRLHMGHVRNYTIGDVVARFQRLQGKNVLQPIGWDSFGLPAENAAINNKTAPAPWTYENIEYMKNQLKLLGFGYDWSREIATCTPEYYRWEQWFFTKLYEKGLVYKKTASVNWCPNDETVLANEQVQDGCCWRCDTPVEQKEIPQWFIKITAYAEELLNDIDTLDGWPEQVKTMQRNWIGRSEGVEMTFGVAGHDKSFDIYTTRPDTLMGVTYVAIAAGHPLAEIAAQTNPELAAFIDECKNSTTSEAELATMEKRGVATGLFAIHPITGKQVPIWAANFVLMNYGTGAVMSVPGHDQRDFEFAKKYGLAIEAVIKPVDGDVDISEAAYTEKGVLFNSGEFDGLDFEAGFNAIANKLVAEGKGKRQVNYRLRDWGVSRQRYWGAPIPMVTLADGTVIPTPADQLPVLLPEDVVMDGIQSPIKADKEWAKTQVNGQDALRETDTFDTFMESSWYYARYCSPHADEMLDPAKANYWLPVDQYIGGIEHACMHLLYFRFFHKLLRDAGLVNSNEPAKQLLTQGMVLADAFYYINEKGARVWVSPLDVATTEKDDKGRITKAIDKDGNELVYTGMSKMSKSKNNGIDPQVMVEKYGADTVRLFMMFASPPELTLEWQESGVEGAHRFIKRLWKLANEHVNQANSEALDVSTLTSDQKALRREVHKTIAKVTDDIGRRQMFNTAVAAVMELMNHLQKAPQTTGQDRAIIGEALSAIVRLLYPIIPHVSFNLWNELGNASNIEDSQWPVVDEAALVEDSKLIVVQVNGKVRAKITVAADADKESVEALGMSDEHVIKYLDGLTVRKVIYVPGKLLSIVAN.

The 'HIGH' region signature appears at 42-52; sequence PYPSGRLHMGH. The 'KMSKS' region motif lies at 618 to 622; it reads KMSKS. An ATP-binding site is contributed by Lys621.

This sequence belongs to the class-I aminoacyl-tRNA synthetase family.

It localises to the cytoplasm. It carries out the reaction tRNA(Leu) + L-leucine + ATP = L-leucyl-tRNA(Leu) + AMP + diphosphate. This Shewanella baltica (strain OS185) protein is Leucine--tRNA ligase.